The sequence spans 158 residues: Transcription elongation factor GreA (158 aa).

This sequence belongs to the GreA/GreB family.

In terms of biological role, necessary for efficient RNA polymerase transcription elongation past template-encoded arresting sites. The arresting sites in DNA have the property of trapping a certain fraction of elongating RNA polymerases that pass through, resulting in locked ternary complexes. Cleavage of the nascent transcript by cleavage factors such as GreA or GreB allows the resumption of elongation from the new 3'terminus. GreA releases sequences of 2 to 3 nucleotides. The sequence is that of Transcription elongation factor GreA from Psychrobacter arcticus (strain DSM 17307 / VKM B-2377 / 273-4).